The sequence spans 860 residues: Leucine--tRNA ligase (860 aa).

Positions 42 to 52 match the 'HIGH' region motif; the sequence is PYPSGRLHMGH. The short motif at 619–623 is the 'KMSKS' region element; it reads KMSKS. An ATP-binding site is contributed by lysine 622.

This sequence belongs to the class-I aminoacyl-tRNA synthetase family.

Its subcellular location is the cytoplasm. The catalysed reaction is tRNA(Leu) + L-leucine + ATP = L-leucyl-tRNA(Leu) + AMP + diphosphate. This chain is Leucine--tRNA ligase, found in Histophilus somni (strain 2336) (Haemophilus somnus).